The chain runs to 569 residues: Oxygen-dependent choline dehydrogenase (569 aa).

9-38 (DYVIIGGGSAGSVLGNRLSEDKDKEVLVLE) contributes to the FAD binding site. H475 serves as the catalytic Proton acceptor.

This sequence belongs to the GMC oxidoreductase family. It depends on FAD as a cofactor.

The catalysed reaction is choline + A = betaine aldehyde + AH2. It carries out the reaction betaine aldehyde + NAD(+) + H2O = glycine betaine + NADH + 2 H(+). It functions in the pathway amine and polyamine biosynthesis; betaine biosynthesis via choline pathway; betaine aldehyde from choline (cytochrome c reductase route): step 1/1. In terms of biological role, involved in the biosynthesis of the osmoprotectant glycine betaine. Catalyzes the oxidation of choline to betaine aldehyde and betaine aldehyde to glycine betaine at the same rate. This chain is Oxygen-dependent choline dehydrogenase, found in Staphylococcus aureus (strain COL).